We begin with the raw amino-acid sequence, 119 residues long: Autophagy-related protein 8 (119 aa).

Glycine 116 carries the Phosphatidylethanolamine amidated glycine lipid modification. Residues 117-119 (EAL) constitute a propeptide, removed in mature form.

The protein belongs to the ATG8 family. Conjugation to phosphatidylethanolamine (PE) leads to homodimerization. Interacts with ATG1, ATG3, ATG4, ATG7 and ATG12. Post-translationally, the C-terminal Glu-117, Ala-118 and Leu-119 residues of ATG8 are removed by ATG4 to expose Gly-116 at the C-terminus. This Gly-116 forms then a thioester bond with ATG7 (E1-like activating enzyme) before being transferred to ATG3 (the specific E2 conjugating enzyme), in order to be finally amidated with phosphatidylethanolamine. This lipid modification anchors ATG8 to membranes and can be reversed by ATG4, releasing soluble ATG8.

It localises to the cytoplasmic vesicle. The protein resides in the cvt vesicle membrane. Its subcellular location is the autophagosome membrane. It is found in the vacuole membrane. In terms of biological role, ubiquitin-like modifier involved in cytoplasm to vacuole transport (Cvt) vesicles and autophagosome formation. With ATG4, mediates the delivery of the vesicles and autophagosomes to the vacuole via the microtubule cytoskeleton. Required for selective autophagic degradation of the nucleus (nucleophagy) as well as for mitophagy which contributes to regulate mitochondrial quantity and quality by eliminating the mitochondria to a basal level to fulfill cellular energy requirements and preventing excess ROS production. Also participates in membrane fusion events that take place in the early secretory pathway. Also involved in endoplasmic reticulum-specific autophagic process and is essential for the survival of cells subjected to severe ER stress. The ATG8-PE conjugate mediates tethering between adjacent membranes and stimulates membrane hemifusion, leading to expansion of the autophagosomal membrane during autophagy. Moreover not only conjugation, but also subsequent ATG8-PE deconjugation is an important step required to facilitate multiple events during macroautophagy, and especially for efficient autophagosome biogenesis, the assembly of ATG9-containing tubulovesicular clusters into phagophores/autophagosomes, and for the disassembly of PAS-associated ATG components. Autophagy is required for conidiation, aerial mycelial growth, and pseudothecia formation, but not for host invasion. The sequence is that of Autophagy-related protein 8 from Cochliobolus heterostrophus (strain C4 / ATCC 48331 / race T) (Southern corn leaf blight fungus).